Here is a 209-residue protein sequence, read N- to C-terminus: V-type ATP synthase subunit D (209 aa).

The protein belongs to the V-ATPase D subunit family.

Functionally, produces ATP from ADP in the presence of a proton gradient across the membrane. The sequence is that of V-type ATP synthase subunit D from Anaeromyxobacter dehalogenans (strain 2CP-1 / ATCC BAA-258).